The sequence spans 521 residues: Bifunctional purine biosynthesis protein PurH (521 aa).

In terms of domain architecture, MGS-like spans 1 to 145 (MIKQALISVS…KNHRDVTVVV (145 aa)).

This sequence belongs to the PurH family.

The catalysed reaction is (6R)-10-formyltetrahydrofolate + 5-amino-1-(5-phospho-beta-D-ribosyl)imidazole-4-carboxamide = 5-formamido-1-(5-phospho-D-ribosyl)imidazole-4-carboxamide + (6S)-5,6,7,8-tetrahydrofolate. The enzyme catalyses IMP + H2O = 5-formamido-1-(5-phospho-D-ribosyl)imidazole-4-carboxamide. It participates in purine metabolism; IMP biosynthesis via de novo pathway; 5-formamido-1-(5-phospho-D-ribosyl)imidazole-4-carboxamide from 5-amino-1-(5-phospho-D-ribosyl)imidazole-4-carboxamide (10-formyl THF route): step 1/1. Its pathway is purine metabolism; IMP biosynthesis via de novo pathway; IMP from 5-formamido-1-(5-phospho-D-ribosyl)imidazole-4-carboxamide: step 1/1. This Burkholderia ambifaria (strain MC40-6) protein is Bifunctional purine biosynthesis protein PurH.